Here is a 315-residue protein sequence, read N- to C-terminus: Protein TIFY 4B (315 aa).

Residues 113–145 (CHRRDSPRSAEFSGSSGQFVADKDSHKTVSVSP) are disordered. Residues 151–186 (TNAVVGQMTIFYSGKVNVYDGVPPEKARSIMHFAAN) form the Tify domain. The Jas motif lies at 233–260 (QANRKVSLQRYLEKRKDRRFSKTKKAPG). Positions 235–242 (NRKVSLQR) match the Nuclear localization signal motif. Basic residues predominate over residues 248-257 (KDRRFSKTKK). The disordered stretch occupies residues 248–315 (KDRRFSKTKK…LNSDLNSEDN (68 aa)). Residues 293–315 (PENQTKSPNISVDLNSDLNSEDN) are compositionally biased toward polar residues.

It belongs to the TIFY/JAZ family. In terms of assembly, interacts with AFPH2/NINJA.

The protein resides in the nucleus. In terms of biological role, regulates the arrest of dispersed meristematic cells during lamina development. This chain is Protein TIFY 4B (TIFY4B), found in Arabidopsis thaliana (Mouse-ear cress).